A 199-amino-acid polypeptide reads, in one-letter code: Ras-related and estrogen-regulated growth inhibitor (199 aa).

GTP is bound by residues 13–20 (GRAGVGKS), 60–64 (DTAGQ), and 118–121 (NKAD).

This sequence belongs to the small GTPase superfamily. Ras family.

The protein localises to the cytoplasm. The enzyme catalyses GTP + H2O = GDP + phosphate + H(+). Functionally, binds GDP/GTP and possesses intrinsic GTPase activity. Has higher affinity for GDP than for GTP. The polypeptide is Ras-related and estrogen-regulated growth inhibitor (RERG) (Bos taurus (Bovine)).